The following is a 432-amino-acid chain: Homogentisate 1,2-dioxygenase (432 aa).

Catalysis depends on histidine 287, which acts as the Proton acceptor. The Fe cation site is built by histidine 330 and glutamate 336. Residues tyrosine 345 and histidine 366 each contribute to the homogentisate site. Position 366 (histidine 366) interacts with Fe cation.

This sequence belongs to the homogentisate dioxygenase family. As to quaternary structure, hexamer; dimer of trimers. Fe cation serves as cofactor.

The catalysed reaction is homogentisate + O2 = 4-maleylacetoacetate + H(+). The protein operates within amino-acid degradation; L-phenylalanine degradation; acetoacetate and fumarate from L-phenylalanine: step 4/6. In terms of biological role, involved in the catabolism of homogentisate (2,5-dihydroxyphenylacetate or 2,5-OH-PhAc), a central intermediate in the degradation of phenylalanine and tyrosine. Catalyzes the oxidative ring cleavage of the aromatic ring of homogentisate to yield maleylacetoacetate. This is Homogentisate 1,2-dioxygenase from Pseudomonas aeruginosa (strain UCBPP-PA14).